We begin with the raw amino-acid sequence, 194 residues long: dCTP deaminase (194 aa).

DCTP is bound by residues 110-115, aspartate 128, 136-138, tyrosine 171, lysine 178, and glutamine 182; these read RSSLAR and VLE. Glutamate 138 functions as the Proton donor/acceptor in the catalytic mechanism.

The protein belongs to the dCTP deaminase family. Homotrimer.

It catalyses the reaction dCTP + H2O + H(+) = dUTP + NH4(+). Its pathway is pyrimidine metabolism; dUMP biosynthesis; dUMP from dCTP (dUTP route): step 1/2. Functionally, catalyzes the deamination of dCTP to dUTP. The protein is dCTP deaminase of Haemophilus ducreyi (strain 35000HP / ATCC 700724).